A 688-amino-acid polypeptide reads, in one-letter code: Elongation factor G (688 aa).

One can recognise a tr-type G domain in the interval 8–282 (EKFRNIGIMA…AVVDFMPSPL (275 aa)). Residues 17–24 (AHIDAGKT), 81–85 (DTPGH), and 135–138 (NKMD) contribute to the GTP site. A disordered region spans residues 282 to 305 (LDIPPIKGTDPETGEETDRPADDN).

This sequence belongs to the TRAFAC class translation factor GTPase superfamily. Classic translation factor GTPase family. EF-G/EF-2 subfamily.

Its subcellular location is the cytoplasm. In terms of biological role, catalyzes the GTP-dependent ribosomal translocation step during translation elongation. During this step, the ribosome changes from the pre-translocational (PRE) to the post-translocational (POST) state as the newly formed A-site-bound peptidyl-tRNA and P-site-bound deacylated tRNA move to the P and E sites, respectively. Catalyzes the coordinated movement of the two tRNA molecules, the mRNA and conformational changes in the ribosome. In Clostridium kluyveri (strain NBRC 12016), this protein is Elongation factor G.